The sequence spans 491 residues: Inositol-pentakisphosphate 2-kinase (491 aa).

The EXKPK motif motif lies at 136-140 (EIKPK). Residue serine 282 is modified to Phosphoserine.

The protein belongs to the IPK1 type 2 family. In terms of tissue distribution, ubiquitously expressed, with high expression in heart, brain, testis and placenta.

Its subcellular location is the cytoplasm. It is found in the nucleus. The enzyme catalyses 1D-myo-inositol 1,3,4,5,6-pentakisphosphate + ATP = 1D-myo-inositol hexakisphosphate + ADP + H(+). Functionally, phosphorylates Ins(1,3,4,5,6)P5 at position 2 to form Ins(1,2,3,4,5,6)P6 (InsP6 or phytate). InsP6 is involved in many processes such as mRNA export, non-homologous end-joining, endocytosis, ion channel regulation. It also protects cells from TNF-alpha-induced apoptosis. The polypeptide is Inositol-pentakisphosphate 2-kinase (IPPK) (Homo sapiens (Human)).